A 134-amino-acid polypeptide reads, in one-letter code: Fluoride-specific ion channel FluC (134 aa).

The next 4 membrane-spanning stretches (helical) occupy residues 7 to 27 (LAVA…TIMA), 38 to 58 (GTLL…IVLV), 69 to 89 (LFLF…AAES), and 110 to 130 (VGSL…LLGH). 2 residues coordinate Na(+): Gly77 and Thr80.

This sequence belongs to the fluoride channel Fluc/FEX (TC 1.A.43) family.

It localises to the cell inner membrane. The enzyme catalyses fluoride(in) = fluoride(out). Its activity is regulated as follows. Na(+) is not transported, but it plays an essential structural role and its presence is essential for fluoride channel function. Its function is as follows. Fluoride-specific ion channel. Important for reducing fluoride concentration in the cell, thus reducing its toxicity. In Legionella pneumophila (strain Paris), this protein is Fluoride-specific ion channel FluC.